We begin with the raw amino-acid sequence, 1261 residues long: MIAHKQKKTKKKRAWASGQLSTDITTSEMGLKSLSSNSIFDPDYIKELVNDIRKFSHMLLYLKEAIFSDCFKEVIHIRLEELLRVLKSIMNKHQNLNSVDLQNAAEMLTAKVKAVNFTEVNEENKNDLFQEVFSSIETLAFTFGNILTNFLMGDVGNDSLLRLPVSRETKSFENVSVESVDSSSEKGNFSPLELDNVLLKNTDSIELALSYAKTWSKYTKNIVSWVEKKLNLELESTRNMVKLAEATRTNIGIQEFMPLQSLFTNALLNDIESSHLLQQTIAALQANKFVQPLLGRKNEMEKQRKEIKELWKQEQNKMLEAENALKKAKLLCMQRQDEYEKAKSSMFRAEEEHLSSSGGLAKNLNKQLEKKRRLEEEALQKVEEANELYKVCVTNVEERRNDLENTKREILAQLRTLVFQCDLTLKAVTVNLFHMQHLQAASLADSLQSLCDSAKLYDPGQEYSEFVKATNSTEEEKVDGNVNKHLNSSQPSGFGPANSLEDVVRLPDSSNKIEEDRCSNSADITGPSFIRSWTFGMFSDSESTGGSSESRSLDSESISPGDFHRKLPRTPSSGTMSSADDLDEREPPSPSETGPNSLGTFKKTLMSKAALTHKFRKLRSPTKCRDCEGIVVFQGVECEECLLVCHRKCLENLVIICGHQKLPGKIHLFGAEFTQVAKKEPDGIPFILKICASEIENRALCLQGIYRVCGNKIKTEKLCQALENGMHLVDISEFSSHDICDVLKLYLRQLPEPFILFRLYKEFIDLAKEIQHVNEEQETKKNSLEDKKWPNMCIEINRILLKSKDLLRQLPASNFNSLHFLIVHLKRVVDHAEENKMNSKNLGVIFGPSLIRPRPTTAPITISSLAEYSNQARLVEFLITYSQKIFDGSLQPQDVMCSIGVVDQGCFPKPLLSPEERDIERSMKSLFFSSKEDIHTSESESKIFERATSFEESERKQNALGKCDACLSDKAQLLLDQEAESASQKIEDGKTPKPLSLKSDRSTNNVERHTPRTKIRPVSLPVDRLLLASPPNERNGRNMGNVNLDKFCKNPAFEGVNRKDAATTVCSKFNGFDQQTLQKIQDKQYEQNSLTAKTTMIMPSALQEKGVTTSLQISGDHSINATQPSKPYAEPVRSVREASERRSSDSYPLAPVRAPRTLQPQHWTTFYKPHAPIISIRGNEEKPASPSAAVPPGTDHDPHGLVVKSMPDPDKASACPGQATGQPKEDSEELGLPDVNPMCQRPRLKRMQQFEDLEGEIPQFV.

4 positions are modified to phosphoserine: S171, S176, S179, and S190. In terms of domain architecture, F-BAR spans 192–462 (LELDNVLLKN…SAKLYDPGQE (271 aa)). Residues 296-418 (RKNEMEKQRK…EILAQLRTLV (123 aa)) are a coiled coil. The interval 481–501 (NVNKHLNSSQPSGFGPANSLE) is disordered. S499, S519, and S552 each carry phosphoserine. A compositionally biased stretch (low complexity) spans 541–559 (SESTGGSSESRSLDSESIS). Residues 541 to 600 (SESTGGSSESRSLDSESISPGDFHRKLPRTPSSGTMSSADDLDEREPPSPSETGPNSLGT) form a disordered region. The Phorbol-ester/DAG-type zinc finger occupies 612–657 (THKFRKLRSPTKCRDCEGIVVFQGVECEECLLVCHRKCLENLVIIC). Positions 671–886 (AEFTQVAKKE…FLITYSQKIF (216 aa)) constitute a Rho-GAP domain. Phosphoserine is present on residues S913 and S949. Residues 981–1011 (SASQKIEDGKTPKPLSLKSDRSTNNVERHTP) form a disordered region. Residues 998 to 1010 (KSDRSTNNVERHT) show a composition bias toward basic and acidic residues. Phosphoserine is present on residues S1019, S1144, and S1146. 2 disordered regions span residues 1117 to 1153 (HSIN…APVR) and 1178 to 1238 (GNEE…VNPM). Over residues 1133 to 1144 (RSVREASERRSS) the composition is skewed to basic and acidic residues. Residues 1258–1261 (PQFV) are interaction with PTPN13/PTPL1.

In terms of assembly, interacts with PTPN13/PTPL1. Interacts with RAP2A via its coiled coil domain. Interacts with RASIP1. Widely expressed. Highly expressed in skeletal muscle and heart. Expressed at intermediate level in placenta, liver and pancreas. Weakly expressed in brain, lung and kidney.

GTPase activator for the Rho-type GTPases by converting them to an inactive GDP-bound state. Has strong activity toward RHOA, and weaker activity toward RAC1 and CDC42. May act as a specific effector of RAP2A to regulate Rho. In concert with RASIP1, suppresses RhoA signaling and dampens ROCK and MYH9 activities in endothelial cells and plays an essential role in blood vessel tubulogenesis. The polypeptide is Rho GTPase-activating protein 29 (ARHGAP29) (Homo sapiens (Human)).